We begin with the raw amino-acid sequence, 215 residues long: Chaperone protein TorD (215 aa).

It belongs to the TorD/DmsD family. TorD subfamily.

It localises to the cytoplasm. Its function is as follows. Involved in the biogenesis of TorA. Acts on TorA before the insertion of the molybdenum cofactor and, as a result, probably favors a conformation of the apoenzyme that is competent for acquiring the cofactor. The chain is Chaperone protein TorD from Aliivibrio fischeri (strain ATCC 700601 / ES114) (Vibrio fischeri).